Consider the following 340-residue polypeptide: ATPase GET3 (340 aa).

35-42 (KGGVGKTT) contributes to the ATP binding site. Residue Asp-64 is part of the active site. Residues Glu-245 and Asn-272 each contribute to the ATP site. Zn(2+)-binding residues include Cys-283 and Cys-286.

It belongs to the arsA ATPase family. As to quaternary structure, homodimer.

It localises to the cytoplasm. It is found in the endoplasmic reticulum. Its function is as follows. ATPase required for the post-translational delivery of tail-anchored (TA) proteins to the endoplasmic reticulum. Recognizes and selectively binds the transmembrane domain of TA proteins in the cytosol. This complex then targets to the endoplasmic reticulum by membrane-bound receptors, where the tail-anchored protein is released for insertion. This process is regulated by ATP binding and hydrolysis. ATP binding drives the homodimer towards the closed dimer state, facilitating recognition of newly synthesized TA membrane proteins. ATP hydrolysis is required for insertion. Subsequently, the homodimer reverts towards the open dimer state, lowering its affinity for the membrane-bound receptor, and returning it to the cytosol to initiate a new round of targeting. The sequence is that of ATPase GET3 from Chaetomium globosum (strain ATCC 6205 / CBS 148.51 / DSM 1962 / NBRC 6347 / NRRL 1970) (Soil fungus).